A 615-amino-acid chain; its full sequence is DNA mismatch repair protein MutL (615 aa).

The protein belongs to the DNA mismatch repair MutL/HexB family.

Functionally, this protein is involved in the repair of mismatches in DNA. It is required for dam-dependent methyl-directed DNA mismatch repair. May act as a 'molecular matchmaker', a protein that promotes the formation of a stable complex between two or more DNA-binding proteins in an ATP-dependent manner without itself being part of a final effector complex. This Parabacteroides distasonis (strain ATCC 8503 / DSM 20701 / CIP 104284 / JCM 5825 / NCTC 11152) protein is DNA mismatch repair protein MutL.